Consider the following 898-residue polypeptide: Phosphoenolpyruvate carboxylase (898 aa).

Residues His138 and Lys561 contribute to the active site.

Belongs to the PEPCase type 1 family. Requires Mg(2+) as cofactor.

It catalyses the reaction oxaloacetate + phosphate = phosphoenolpyruvate + hydrogencarbonate. In terms of biological role, forms oxaloacetate, a four-carbon dicarboxylic acid source for the tricarboxylic acid cycle. This is Phosphoenolpyruvate carboxylase from Streptococcus pneumoniae serotype 4 (strain ATCC BAA-334 / TIGR4).